The sequence spans 299 residues: Protein U23 (299 aa).

A signal peptide spans 1–27; sequence MRKSEFNAKSCFLMIGICVFNLNSSSC. Residues 247–267 form a helical membrane-spanning segment; that stretch reads LVIWICGISFVGAFIIVIVIL.

Its subcellular location is the host membrane. This Human herpesvirus 6B (strain Z29) (HHV-6 variant B) protein is Protein U23 (U23).